The primary structure comprises 358 residues: tRNA pseudouridine synthase B (358 aa).

The disordered stretch occupies residues 1-50; the sequence is MTTPDAAIDSKISDSNGADKNKSAADDNAFNAPGRKRHHNNQPRRDKRDV. The active-site Nucleophile is the Asp87.

Belongs to the pseudouridine synthase TruB family. Type 1 subfamily.

The enzyme catalyses uridine(55) in tRNA = pseudouridine(55) in tRNA. Responsible for synthesis of pseudouridine from uracil-55 in the psi GC loop of transfer RNAs. This chain is tRNA pseudouridine synthase B, found in Nitrobacter winogradskyi (strain ATCC 25391 / DSM 10237 / CIP 104748 / NCIMB 11846 / Nb-255).